Here is a 418-residue protein sequence, read N- to C-terminus: Serpin H1 (418 aa).

An N-terminal signal peptide occupies residues 1-18 (MRALLLISTICLLARALA). The residue at position 94 (lysine 94) is an N6-succinyllysine. 2 N-linked (GlcNAc...) asparagine glycosylation sites follow: asparagine 120 and asparagine 125. Residue serine 141 is modified to Phosphoserine. Lysine 207 is subject to N6-acetyllysine. Residue lysine 296 is modified to N6-succinyllysine. Position 319 is an N6-acetyllysine (lysine 319). Positions 415 to 418 (RDEL) match the Prevents secretion from ER motif.

It belongs to the serpin family.

Its subcellular location is the endoplasmic reticulum lumen. Binds specifically to collagen. Could be involved as a chaperone in the biosynthetic pathway of collagen. The polypeptide is Serpin H1 (SERPINH1) (Bos taurus (Bovine)).